Reading from the N-terminus, the 68-residue chain is Peptide TsPep3 (68 aa).

Residues Met1 to Ala26 form the signal peptide. Disulfide bonds link Cys30–Cys38, Cys33–Cys54, Cys37–Cys47, and Cys42–Cys52. Positions Gly56 to Gln68 are excised as a propeptide.

As to expression, expressed by the venom gland.

The protein localises to the secreted. Its function is as follows. Probable weak potassium channel blocker. The protein is Peptide TsPep3 of Tityus serrulatus (Brazilian scorpion).